A 333-amino-acid polypeptide reads, in one-letter code: DNA-directed RNA polymerase subunit alpha (333 aa).

The tract at residues 1-234 is alpha N-terminal domain (alpha-NTD); sequence MQISVNEFLT…QQLAAFVDLK (234 aa). An alpha C-terminal domain (alpha-CTD) region spans residues 248 to 333; it reads IDPILLRPVD…SLKKDDKATA (86 aa).

It belongs to the RNA polymerase alpha chain family. As to quaternary structure, homodimer. The RNAP catalytic core consists of 2 alpha, 1 beta, 1 beta' and 1 omega subunit. When a sigma factor is associated with the core the holoenzyme is formed, which can initiate transcription.

It catalyses the reaction RNA(n) + a ribonucleoside 5'-triphosphate = RNA(n+1) + diphosphate. Its function is as follows. DNA-dependent RNA polymerase catalyzes the transcription of DNA into RNA using the four ribonucleoside triphosphates as substrates. The polypeptide is DNA-directed RNA polymerase subunit alpha (Pseudomonas syringae pv. tomato (strain ATCC BAA-871 / DC3000)).